The following is a 446-amino-acid chain: Signal recognition particle 54 kDa protein (446 aa).

Residues 104–111, 184–188, and 242–245 contribute to the GTP site; these read GLQGSGKT, DTAGR, and TKMD.

The protein belongs to the GTP-binding SRP family. SRP54 subfamily. Part of the signal recognition particle protein translocation system, which is composed of SRP and FtsY. Archaeal SRP consists of a 7S RNA molecule of 300 nucleotides and two protein subunits: SRP54 and SRP19.

Its subcellular location is the cytoplasm. It carries out the reaction GTP + H2O = GDP + phosphate + H(+). Involved in targeting and insertion of nascent membrane proteins into the cytoplasmic membrane. Binds to the hydrophobic signal sequence of the ribosome-nascent chain (RNC) as it emerges from the ribosomes. The SRP-RNC complex is then targeted to the cytoplasmic membrane where it interacts with the SRP receptor FtsY. This Methanocorpusculum labreanum (strain ATCC 43576 / DSM 4855 / Z) protein is Signal recognition particle 54 kDa protein.